We begin with the raw amino-acid sequence, 508 residues long: Steroid 17-alpha-hydroxylase/17,20 lyase (508 aa).

Asn-202 lines the substrate pocket. Cys-442 lines the heme pocket.

It belongs to the cytochrome P450 family. Heme is required as a cofactor.

It localises to the endoplasmic reticulum membrane. It is found in the microsome membrane. The enzyme catalyses a C21-steroid + reduced [NADPH--hemoprotein reductase] + O2 = a 17alpha-hydroxy-C21-steroid + oxidized [NADPH--hemoprotein reductase] + H2O + H(+). The catalysed reaction is progesterone + reduced [NADPH--hemoprotein reductase] + O2 = 17alpha-hydroxyprogesterone + oxidized [NADPH--hemoprotein reductase] + H2O + H(+). It catalyses the reaction pregnenolone + reduced [NADPH--hemoprotein reductase] + O2 = 17alpha-hydroxypregnenolone + oxidized [NADPH--hemoprotein reductase] + H2O + H(+). It carries out the reaction 17alpha-hydroxyprogesterone + reduced [NADPH--hemoprotein reductase] + O2 = androst-4-ene-3,17-dione + acetate + oxidized [NADPH--hemoprotein reductase] + H2O + 2 H(+). The enzyme catalyses 17alpha-hydroxyprogesterone + reduced [NADPH--hemoprotein reductase] + O2 = 16alpha,17alpha-dihydroxyprogesterone + oxidized [NADPH--hemoprotein reductase] + H2O + H(+). The catalysed reaction is 16alpha,17alpha-dihydroxyprogesterone + reduced [NADPH--hemoprotein reductase] + O2 = 6beta,16alpha,17alpha-trihydroxyprogesterone + oxidized [NADPH--hemoprotein reductase] + H2O + H(+). It catalyses the reaction 17alpha-hydroxypregnenolone + reduced [NADPH--hemoprotein reductase] + O2 = 3beta-hydroxyandrost-5-en-17-one + acetate + oxidized [NADPH--hemoprotein reductase] + H2O + 2 H(+). It carries out the reaction 16alpha,17alpha-dihydroxypregnenolone + reduced [NADPH--hemoprotein reductase] + O2 = 3beta,16alpha-dihydroxy-androst-5-en-17-one + acetate + oxidized [NADPH--hemoprotein reductase] + H2O + 2 H(+). The enzyme catalyses 3beta-hydroxyandrost-5-en-17-one + reduced [NADPH--hemoprotein reductase] + O2 = 3beta,16alpha-dihydroxy-androst-5-en-17-one + oxidized [NADPH--hemoprotein reductase] + H2O + H(+). The catalysed reaction is androst-4-ene-3,17-dione + reduced [NADPH--hemoprotein reductase] + O2 = 16alpha-hydroxyandrost-4-ene-3,17-dione + oxidized [NADPH--hemoprotein reductase] + H2O + H(+). It participates in steroid hormone biosynthesis. It functions in the pathway steroid biosynthesis; glucocorticoid biosynthesis. Its activity is regulated as follows. Regulated predominantly by intracellular cAMP levels. The 17,20-lyase activity is stimulated by cytochrome b5, which acts as an allosteric effector increasing the Vmax of the lyase activity. In terms of biological role, a cytochrome P450 monooxygenase involved in corticoid and androgen biosynthesis. Catalyzes 17-alpha hydroxylation of C21 steroids, which is common for both pathways. A second oxidative step, required only for androgen synthesis, involves an acyl-carbon cleavage. The 17-alpha hydroxy intermediates, as part of adrenal glucocorticoids biosynthesis pathway, are precursors of cortisol. Hydroxylates steroid hormones, pregnenolone and progesterone to form 17-alpha hydroxy metabolites, followed by the cleavage of the C17-C20 bond to form C19 steroids, dehydroepiandrosterone (DHEA) and androstenedione. Has 16-alpha hydroxylase activity. Catalyzes 16-alpha hydroxylation of 17-alpha hydroxy pregnenolone, followed by the cleavage of the C17-C20 bond to form 16-alpha-hydroxy DHEA. Also 16-alpha hydroxylates androgens, relevant for estriol synthesis. Mechanistically, uses molecular oxygen inserting one oxygen atom into a substrate, and reducing the second into a water molecule, with two electrons provided by NADPH via cytochrome P450 reductase (CPR; NADPH-ferrihemoprotein reductase). The protein is Steroid 17-alpha-hydroxylase/17,20 lyase (CYP17A1) of Felis catus (Cat).